The chain runs to 277 residues: Zinc finger protein 511 (277 aa).

C2H2-type zinc fingers lie at residues Phe-96–His-121, Asn-123–His-146, and Tyr-160–His-185. The segment at Glu-225 to Met-244 is disordered.

It belongs to the krueppel C2H2-type zinc-finger protein family.

It is found in the nucleus. Functionally, may be involved in transcriptional regulation. The sequence is that of Zinc finger protein 511 (znf511) from Danio rerio (Zebrafish).